We begin with the raw amino-acid sequence, 739 residues long: Phosphoribosylformylglycinamidine synthase subunit PurL (739 aa).

Residue H54 is part of the active site. Residues Y57 and K96 each contribute to the ATP site. Residue E98 coordinates Mg(2+). Substrate is bound by residues 99-102 (SHNH) and R121. The active-site Proton acceptor is the H100. D122 lines the Mg(2+) pocket. Q245 contributes to the substrate binding site. D273 is a binding site for Mg(2+). 317–319 (ESQ) provides a ligand contact to substrate. The ATP site is built by D500 and G537. N538 contacts Mg(2+). S540 contacts substrate.

It belongs to the FGAMS family. As to quaternary structure, monomer. Part of the FGAM synthase complex composed of 1 PurL, 1 PurQ and 2 PurS subunits.

Its subcellular location is the cytoplasm. The catalysed reaction is N(2)-formyl-N(1)-(5-phospho-beta-D-ribosyl)glycinamide + L-glutamine + ATP + H2O = 2-formamido-N(1)-(5-O-phospho-beta-D-ribosyl)acetamidine + L-glutamate + ADP + phosphate + H(+). It functions in the pathway purine metabolism; IMP biosynthesis via de novo pathway; 5-amino-1-(5-phospho-D-ribosyl)imidazole from N(2)-formyl-N(1)-(5-phospho-D-ribosyl)glycinamide: step 1/2. Its function is as follows. Part of the phosphoribosylformylglycinamidine synthase complex involved in the purines biosynthetic pathway. Catalyzes the ATP-dependent conversion of formylglycinamide ribonucleotide (FGAR) and glutamine to yield formylglycinamidine ribonucleotide (FGAM) and glutamate. The FGAM synthase complex is composed of three subunits. PurQ produces an ammonia molecule by converting glutamine to glutamate. PurL transfers the ammonia molecule to FGAR to form FGAM in an ATP-dependent manner. PurS interacts with PurQ and PurL and is thought to assist in the transfer of the ammonia molecule from PurQ to PurL. The polypeptide is Phosphoribosylformylglycinamidine synthase subunit PurL (Bacillus mycoides (strain KBAB4) (Bacillus weihenstephanensis)).